The primary structure comprises 508 residues: PTS system mannitol-specific EIICB component (508 aa).

Topologically, residues 1-30 (MSQTETQENKGLGRKVQAFGSFLSSMIMPN) are cytoplasmic. The PTS EIIC type-2 domain maps to 19–351 (FGSFLSSMIM…LKFTKEPEED (333 aa)). The chain crosses the membrane as a helical span at residues 31 to 52 (IGAFIAWGFIAAIFIDGGWWPN). Residues 53–56 (KDLS) are Extracellular-facing. A helical membrane pass occupies residues 57-77 (ELAGPMISYLIPLLIAYSGGR). Residues 78-141 (LIHEMRGGII…QGFEMLFNNF (64 aa)) are Cytoplasmic-facing. The helical transmembrane segment at 142–163 (SAGILGFIMTIVGFKILAPIME) threads the bilayer. The Extracellular segment spans residues 164 to 172 (FIMHILSLA). A helical membrane pass occupies residues 173–193 (VEALVHAHLLPLVSIIVEPAK). Residues 194-280 (IVFLNNAINH…VLMRPLLFIA (87 aa)) lie on the Cytoplasmic side of the membrane. A helical transmembrane segment spans residues 281 to 300 (VILGGMTGVATYSLLDFGFK). Residues 301 to 320 (SPASPGSFIVYMLNAPKGEF) are Extracellular-facing. A helical membrane pass occupies residues 321-342 (LHMVLGVLLAAIVSFIVAALIL). The Cytoplasmic portion of the chain corresponds to 343–508 (KFTKEPEEDL…RYDELLENLK (166 aa)). The disordered stretch occupies residues 355 to 400 (ATEKMEASKGKKSSVSSKLKGNEDNNATSTTASTSTSENNEEQSEE). Residues 367–392 (SSVSSKLKGNEDNNATSTTASTSTSE) show a composition bias toward low complexity. The 89-residue stretch at 420 to 508 (NHVIFACDAG…RYDELLENLK (89 aa)) folds into the PTS EIIB type-2 domain. C426 (phosphocysteine intermediate; for EIIB activity) is an active-site residue. Phosphocysteine; by EIIA is present on C426.

As to quaternary structure, homodimer.

Its subcellular location is the cell membrane. The catalysed reaction is D-mannitol(out) + N(pros)-phospho-L-histidyl-[protein] = D-mannitol 1-phosphate(in) + L-histidyl-[protein]. Functionally, the phosphoenolpyruvate-dependent sugar phosphotransferase system (sugar PTS), a major carbohydrate active transport system, catalyzes the phosphorylation of incoming sugar substrates concomitantly with their translocation across the cell membrane. The enzyme II CmtAB PTS system is involved in D-mannitol transport. This chain is PTS system mannitol-specific EIICB component (mtlA), found in Staphylococcus saprophyticus subsp. saprophyticus (strain ATCC 15305 / DSM 20229 / NCIMB 8711 / NCTC 7292 / S-41).